A 404-amino-acid chain; its full sequence is Chorismate synthase (404 aa).

The NADP(+) site is built by arginine 40 and arginine 46. FMN-binding positions include 133 to 135 (RSS), 266 to 267 (QA), glycine 313, 328 to 332 (KPIPT), and arginine 354. A disordered region spans residues 283-320 (PGSQVHDPIEPREDGAQAYPRRTNHAGGTEGGTTTGMP). The segment at 337 to 357 (LDSVDTATGEPEPTRYERSDI) is disordered.

Belongs to the chorismate synthase family. In terms of assembly, homotetramer. FMNH2 serves as cofactor.

It catalyses the reaction 5-O-(1-carboxyvinyl)-3-phosphoshikimate = chorismate + phosphate. Its pathway is metabolic intermediate biosynthesis; chorismate biosynthesis; chorismate from D-erythrose 4-phosphate and phosphoenolpyruvate: step 7/7. Functionally, catalyzes the anti-1,4-elimination of the C-3 phosphate and the C-6 proR hydrogen from 5-enolpyruvylshikimate-3-phosphate (EPSP) to yield chorismate, which is the branch point compound that serves as the starting substrate for the three terminal pathways of aromatic amino acid biosynthesis. This reaction introduces a second double bond into the aromatic ring system. This chain is Chorismate synthase, found in Salinibacter ruber (strain DSM 13855 / M31).